A 171-amino-acid polypeptide reads, in one-letter code: ATP synthase subunit b (171 aa).

A helical membrane pass occupies residues 10–30 (GLYYGDSIFYAVCFLLLMWII).

This sequence belongs to the ATPase B chain family. F-type ATPases have 2 components, F(1) - the catalytic core - and F(0) - the membrane proton channel. F(1) has five subunits: alpha(3), beta(3), gamma(1), delta(1), epsilon(1). F(0) has three main subunits: a(1), b(2) and c(10-14). The alpha and beta chains form an alternating ring which encloses part of the gamma chain. F(1) is attached to F(0) by a central stalk formed by the gamma and epsilon chains, while a peripheral stalk is formed by the delta and b chains.

Its subcellular location is the cell membrane. Functionally, f(1)F(0) ATP synthase produces ATP from ADP in the presence of a proton or sodium gradient. F-type ATPases consist of two structural domains, F(1) containing the extramembraneous catalytic core and F(0) containing the membrane proton channel, linked together by a central stalk and a peripheral stalk. During catalysis, ATP synthesis in the catalytic domain of F(1) is coupled via a rotary mechanism of the central stalk subunits to proton translocation. Its function is as follows. Component of the F(0) channel, it forms part of the peripheral stalk, linking F(1) to F(0). This Levilactobacillus brevis (strain ATCC 367 / BCRC 12310 / CIP 105137 / JCM 1170 / LMG 11437 / NCIMB 947 / NCTC 947) (Lactobacillus brevis) protein is ATP synthase subunit b.